The following is a 958-amino-acid chain: Importin-13 (958 aa).

HEAT repeat units follow at residues Glu19–Val49, Pro51–Ala83, Pro90–Met130, Ala137–Thr174, Leu189–Gln226, Leu231–Ser263, Val271–Asp320, Trp325–Leu367, Glu370–Leu433, Ala435–Ile471, Val482–Asp517, Pro519–Cys553, Leu557–Ala595, Val598–Phe643, Pro671–Leu711, Phe715–Phe749, Phe756–Arg798, Val810–Leu840, Glu855–Asn888, and Phe892–Leu926. The region spanning Ala40–Arg106 is the Importin N-terminal domain.

This sequence belongs to the importin beta family.

The protein resides in the cytoplasm. It localises to the nucleus. In terms of biological role, functions in nuclear protein import as nuclear transport receptor. Serves as receptor for nuclear localization signals (NLS) in cargo substrates. Is thought to mediate docking of the importin/substrate complex to the nuclear pore complex (NPC) through binding to nucleoporin and the complex is subsequently translocated through the pore by an energy requiring, Ran-dependent mechanism. At the nucleoplasmic side of the NPC, Ran binds to the importin, the importin/substrate complex dissociates and importin is re-exported from the nucleus to the cytoplasm where GTP hydrolysis releases Ran. The directionality of nuclear import is thought to be conferred by an asymmetric distribution of the GTP- and GDP-bound forms of Ran between the cytoplasm and nucleus. The protein is Importin-13 (IPO13) of Gallus gallus (Chicken).